A 227-amino-acid polypeptide reads, in one-letter code: NADH-quinone oxidoreductase subunit C (227 aa).

Belongs to the complex I 30 kDa subunit family. In terms of assembly, NDH-1 is composed of 14 different subunits. Subunits NuoB, C, D, E, F, and G constitute the peripheral sector of the complex.

Its subcellular location is the cell inner membrane. The enzyme catalyses a quinone + NADH + 5 H(+)(in) = a quinol + NAD(+) + 4 H(+)(out). Its function is as follows. NDH-1 shuttles electrons from NADH, via FMN and iron-sulfur (Fe-S) centers, to quinones in the respiratory chain. The immediate electron acceptor for the enzyme in this species is believed to be ubiquinone. Couples the redox reaction to proton translocation (for every two electrons transferred, four hydrogen ions are translocated across the cytoplasmic membrane), and thus conserves the redox energy in a proton gradient. This chain is NADH-quinone oxidoreductase subunit C, found in Legionella pneumophila subsp. pneumophila (strain Philadelphia 1 / ATCC 33152 / DSM 7513).